The sequence spans 122 residues: Small ribosomal subunit protein uS13 (122 aa).

Residues 99–122 (RGQRTHTNARTRKGPAKAIAGKKK) are disordered.

The protein belongs to the universal ribosomal protein uS13 family. As to quaternary structure, part of the 30S ribosomal subunit. Forms a loose heterodimer with protein S19. Forms two bridges to the 50S subunit in the 70S ribosome.

Located at the top of the head of the 30S subunit, it contacts several helices of the 16S rRNA. In the 70S ribosome it contacts the 23S rRNA (bridge B1a) and protein L5 of the 50S subunit (bridge B1b), connecting the 2 subunits; these bridges are implicated in subunit movement. Contacts the tRNAs in the A and P-sites. This Cereibacter sphaeroides (strain ATCC 17025 / ATH 2.4.3) (Rhodobacter sphaeroides) protein is Small ribosomal subunit protein uS13.